The following is a 522-amino-acid chain: Sorting nexin-1 (522 aa).

Disordered stretches follow at residues methionine 1 to phenylalanine 89 and serine 115 to glutamine 142. 2 positions are modified to phosphoserine: serine 32 and serine 39. Positions glutamate 35–aspartate 45 are enriched in acidic residues. A phosphothreonine mark is found at threonine 41 and threonine 48. Serine 58 and serine 72 each carry phosphoserine. Polar residues predominate over residues lysine 60–lysine 73. Residues glutamate 132–glutamine 142 show a composition bias toward acidic residues. Residues phenylalanine 143–arginine 272 form the PX domain. A 1,2-diacyl-sn-glycero-3-phospho-(1D-myo-inositol-3-phosphate)-binding residues include arginine 186, serine 188, and lysine 214. Residue serine 188 is modified to Phosphoserine. Lysine 237 is modified (N6-acetyllysine). Residue arginine 238 coordinates a 1,2-diacyl-sn-glycero-3-phospho-(1D-myo-inositol-3-phosphate). Serine 280 is subject to Phosphoserine. The segment at glycine 281–methionine 298 is membrane-binding amphipathic helix. One can recognise a BAR domain in the interval methionine 302–serine 522.

This sequence belongs to the sorting nexin family. As to quaternary structure, predominantly forms heterodimers with BAR domain-containing sorting nexins SNX5, SNX6 and SNX32; can self-associate to form homodimers. The heterodimers are proposed to self-assemble into helical arrays on the membrane to stabilize and expand local membrane curvature underlying endosomal tubule formation. Thought to be a component of the originally described retromer complex (also called SNX-BAR retromer) which is a pentamer containing the heterotrimeric retromer cargo-selective complex (CSC), also described as vacuolar protein sorting subcomplex (VPS) and a heterodimeric membrane-deforming subcomplex formed between SNX1 or SNX2 and SNX5 or SNX6 (also called SNX-BAR subcomplex); the respective CSC and SNX-BAR subcomplexes associate with low affinity. Interacts with SNX5, SNX6, SNX32, VPS26A, VPS29, VPS35, DRD5, DENND5A, KALRN, RHOG (GDP-bound form). The interaction with SNX2 is reported controversially. Interacts with DNAJC13; prevented by presence of HGS. Interacts with HGS.

It is found in the endosome membrane. Its subcellular location is the golgi apparatus. The protein localises to the trans-Golgi network membrane. It localises to the early endosome membrane. The protein resides in the cell projection. It is found in the lamellipodium. Its function is as follows. Involved in several stages of intracellular trafficking. Interacts with membranes containing phosphatidylinositol 3-phosphate (PtdIns(3P)) or phosphatidylinositol 3,5-bisphosphate (PtdIns(3,5)P2). Acts in part as component of the retromer membrane-deforming SNX-BAR subcomplex. The SNX-BAR retromer mediates retrograde transport of cargo proteins from endosomes to the trans-Golgi network (TGN) and is involved in endosome-to-plasma membrane transport for cargo protein recycling. The SNX-BAR subcomplex functions to deform the donor membrane into a tubular profile called endosome-to-TGN transport carrier (ETC). Can sense membrane curvature and has in vitro vesicle-to-membrane remodeling activity. Involved in retrograde endosome-to-TGN transport of lysosomal enzyme receptors (IGF2R, M6PR and SORT1). Plays a role in targeting ligand-activated EGFR to the lysosomes for degradation after endocytosis from the cell surface and release from the Golgi. Involvement in retromer-independent endocytic trafficking of P2RY1 and lysosomal degradation of protease-activated receptor-1/F2R. Promotes KALRN- and RHOG-dependent but retromer-independent membrane remodeling such as lamellipodium formation; the function is dependent on GEF activity of KALRN. Required for endocytosis of DRD5 upon agonist stimulation but not for basal receptor trafficking. The polypeptide is Sorting nexin-1 (SNX1) (Macaca fascicularis (Crab-eating macaque)).